The sequence spans 173 residues: Insertion element IS150 protein InsJ (173 aa).

This sequence belongs to the IS150/IS1296 orfA family.

The sequence is that of Insertion element IS150 protein InsJ (insJ) from Escherichia coli (strain K12).